The sequence spans 466 residues: UDP-N-acetylglucosamine--dolichyl-phosphate N-acetylglucosaminephosphotransferase (466 aa).

A helical membrane pass occupies residues 12 to 32 (AAFAVAAHAPVLGLILLGSIV). Asp57 contributes to the UDP-N-acetyl-alpha-D-glucosamine binding site. An N-linked (GlcNAc...) asparagine glycan is attached at Asn59. UDP-N-acetyl-alpha-D-glucosamine is bound at residue Glu90. A run of 2 helical transmembrane segments spans residues 91-111 (SLGILVGAMYLSVVVVLTVCL) and 124-144 (PYASLPGPLMTITVMLLLGFV). Lys155 contacts dolichyl phosphate. Helical transmembrane passes span 156 to 176 (IILTALGSLPLIMTYDGSLSV) and 236 to 256 (GAALIYLGPVYLVYLSMLCIF). 255–263 (IFCTNSINI) provides a ligand contact to dolichyl phosphate. Asn262 is a Mg(2+) binding site. A run of 4 helical transmembrane segments spans residues 263-283 (ILAGVNGVEVGQSIVIAVASV), 316-336 (DHQLRALLLLGPFIGVSLALW), 345-365 (VFVGDSYTYFAGTVLAVSSIT), and 374-394 (LFFAPQVFNFLISLPQLFSIV). Residue Asn268 participates in UDP-N-acetyl-alpha-D-glucosamine binding. Residue Asp349 coordinates Mg(2+). 398–400 (RHR) provides a ligand contact to UDP-N-acetyl-alpha-D-glucosamine. A glycan (N-linked (GlcNAc...) asparagine) is linked at Asn416. A helical membrane pass occupies residues 442–462 (CQVIACVLGFVVRYVLSAFLY).

Belongs to the glycosyltransferase 4 family. The cofactor is Mg(2+).

The protein resides in the endoplasmic reticulum membrane. It carries out the reaction a di-trans,poly-cis-dolichyl phosphate + UDP-N-acetyl-alpha-D-glucosamine = an N-acetyl-alpha-D-glucosaminyl-diphospho-di-trans,poly-cis-dolichol + UMP. It functions in the pathway protein modification; protein glycosylation. Inhibited by natural nucleoside antibiotic tunicamycin, which acts as a structural analog and competitor of UDP-GlcNAc. Functionally, UDP-N-acetylglucosamine--dolichyl-phosphate N-acetylglucosaminephosphotransferase that operates in the biosynthetic pathway of dolichol-linked oligosaccharides, the glycan precursors employed in protein asparagine (N)-glycosylation. The assembly of dolichol-linked oligosaccharides begins on the cytosolic side of the endoplasmic reticulum membrane and finishes in its lumen. The sequential addition of sugars to dolichol pyrophosphate produces dolichol-linked oligosaccharides containing fourteen sugars, including two GlcNAcs, nine mannoses and three glucoses. Once assembled, the oligosaccharide is transferred from the lipid to nascent proteins by oligosaccharyltransferases. Catalyzes the initial step of dolichol-linked oligosaccharide biosynthesis, transfering GlcNAc-1-P from cytosolic UDP-GlcNAc onto the carrier lipid dolichyl phosphate (P-dolichol), yielding GlcNAc-P-P-dolichol embedded in the cytoplasmic leaflet of the endoplasmic reticulum membrane. This Leishmania amazonensis protein is UDP-N-acetylglucosamine--dolichyl-phosphate N-acetylglucosaminephosphotransferase (NAGT).